The primary structure comprises 379 residues: Chaperone protein DnaJ (379 aa).

The J domain occupies 5–70 (DYYEVLGVEK…QKRAAYDQYG (66 aa)). Residues 133 to 211 (GKSVEIRVPT…CHGQGRVEKT (79 aa)) form a CR-type zinc finger. Cysteine 146, cysteine 149, cysteine 163, cysteine 166, cysteine 185, cysteine 188, cysteine 199, and cysteine 202 together coordinate Zn(2+). CXXCXGXG motif repeat units lie at residues 146 to 153 (CDTCDGSG), 163 to 170 (CTTCHGQG), 185 to 192 (CPTCGGKG), and 199 to 206 (CDVCHGQG).

This sequence belongs to the DnaJ family. In terms of assembly, homodimer. Zn(2+) is required as a cofactor.

It is found in the cytoplasm. Functionally, participates actively in the response to hyperosmotic and heat shock by preventing the aggregation of stress-denatured proteins and by disaggregating proteins, also in an autonomous, DnaK-independent fashion. Unfolded proteins bind initially to DnaJ; upon interaction with the DnaJ-bound protein, DnaK hydrolyzes its bound ATP, resulting in the formation of a stable complex. GrpE releases ADP from DnaK; ATP binding to DnaK triggers the release of the substrate protein, thus completing the reaction cycle. Several rounds of ATP-dependent interactions between DnaJ, DnaK and GrpE are required for fully efficient folding. Also involved, together with DnaK and GrpE, in the DNA replication of plasmids through activation of initiation proteins. This is Chaperone protein DnaJ from Pseudoalteromonas atlantica (strain T6c / ATCC BAA-1087).